The following is a 460-amino-acid chain: Kynureninase (460 aa).

Pyridoxal 5'-phosphate-binding positions include Leu-116, Thr-117, 144–147 (FPSD), Ser-199, Asp-228, His-231, and Tyr-253. An N6-(pyridoxal phosphate)lysine modification is found at Lys-254. Residues Trp-288 and Asn-316 each coordinate pyridoxal 5'-phosphate.

This sequence belongs to the kynureninase family. As to quaternary structure, homodimer. The cofactor is pyridoxal 5'-phosphate.

The protein resides in the cytoplasm. The catalysed reaction is L-kynurenine + H2O = anthranilate + L-alanine + H(+). It carries out the reaction 3-hydroxy-L-kynurenine + H2O = 3-hydroxyanthranilate + L-alanine + H(+). The protein operates within amino-acid degradation; L-kynurenine degradation; L-alanine and anthranilate from L-kynurenine: step 1/1. It functions in the pathway cofactor biosynthesis; NAD(+) biosynthesis; quinolinate from L-kynurenine: step 2/3. Functionally, catalyzes the cleavage of L-kynurenine (L-Kyn) and L-3-hydroxykynurenine (L-3OHKyn) into anthranilic acid (AA) and 3-hydroxyanthranilic acid (3-OHAA), respectively. The polypeptide is Kynureninase (Debaryomyces hansenii (strain ATCC 36239 / CBS 767 / BCRC 21394 / JCM 1990 / NBRC 0083 / IGC 2968) (Yeast)).